The primary structure comprises 525 residues: G patch domain-containing protein 3 (525 aa).

Disordered stretches follow at residues 54–85 (ERGP…PASD) and 246–317 (EQEE…QERT). Positions 274 to 299 (DEPEDEGQQQEEEEESGSEEDDDRGE) are enriched in acidic residues. The segment covering 300–317 (EWERHEALHEDVTGQERT) has biased composition (basic and acidic residues). Positions 411 to 459 (TKGIGRKVMERQGWAEGQGLGSRCSGVPEALDGDGQHPRCKRGLGYHGE) constitute a G-patch domain.

In terms of assembly, interacts with mitochondrial MAVS; the interaction is markedly increased upon viral infection.

The protein localises to the nucleus. It localises to the cytoplasm. In terms of biological role, involved in transcriptional regulation. It is able to activate transcription from CXCR4 promoter and therefore it might control neural crest cell migration involved in ocular and craniofacial development. Is a negative regulator of immune antiviral response, acting via down-regulation of RIG-I-like receptors signaling and inhibition of type I interferon production. The control mechanism involves interaction with mitochondrial MAVS and inhibition of MAVS assembly with downstream proteins implicated in antiviral response, such as TBK1 and TRAF6. The chain is G patch domain-containing protein 3 (Gpatch3) from Mus musculus (Mouse).